The sequence spans 527 residues: Protein PLASTID TRANSCRIPTIONALLY ACTIVE 12, chloroplastic (527 aa).

A chloroplast-targeting transit peptide spans 1 to 30; the sequence is MASISTTTWLYRGQVCTDSGKSSNCIVQRR. Residues 1 to 115 are PHYA-interacting region 1 (PIR1); the sequence is MASISTTTWL…ASIPGEDYWP (115 aa). The segment at 89–188 is disordered; the sequence is SYMDSTSGKL…NDSSDGFVTY (100 aa). Over residues 163-181 the composition is skewed to acidic residues; the sequence is TNDEVSDSEDSSEEEENDS. 2 consecutive short sequence motifs (nuclear localization signal) follow at residues 204–211 and 235–242; these read DKKLGRPH and WRKPEKEQ. A PHYA-interacting region 2 (PIR2) region spans residues 252-352; the sequence is DVETVFLKAM…EMFSHQTDRE (101 aa). Over residues 458 to 471 the composition is skewed to acidic residues; it reads GENDDDEDDADVEK. Positions 458-527 are disordered; sequence GENDDDEDDA…LMDFEEETDP (70 aa). Basic and acidic residues predominate over residues 485–504; that stretch reads ETPELRTAKPKPKKEGRMSL. The segment covering 506–527 has biased composition (acidic residues); the sequence is EAVDDAENLTDFLMDFEEETDP. A Required and sufficient for transcriptional transactivation activity and to trigger PIF proteins degradation motif is present at residues 512–520; sequence ENLTDFLMD.

Component of the transcriptionally active chromosome (TAC) complexes. Interacts with PTAC14 and PTAC7. Binds directly to PTAC6/PAP8 in the nucleus. Interacts with MED14. Binds to SL1/MTERF3. Binds to photoactivated phytochromes (e.g. PHYA and PHYB) via their photosensory domains; these interactions stimulate its light-mediated accumulation. Associates, via its N-terminal region, with phytochrome-interacting factors (PIFs) including PIF1, PIF3, PIF4, PIF5, PIF6, BHLH72/PIF7, UNE10/PIF8 and PIL1. Binds to RAD4. Associates with MRL7/RCB. As to expression, mostly expressed in cotyledons, leaves, stems and flowers, but barely in roots.

It localises to the plastid. Its subcellular location is the chloroplast. The protein resides in the nucleus. Functionally, involved in plastid gene expression. Acidic transcriptional coactivator necessary for the transactivation of many PIFs target genes (class B genes), particularly during the regulation of hypocotyl growth. Plays dual opposite roles in regulating hypocotyl growth, preventing it in red and far-red conditions, but promoting it otherwise. Required in the nucleus for the initiation of photomorphogenesis mediated by phytochromes (PHYs) (e.g. PHYA and PHYB) by mediating PHYs localization to photobodies, especially in response to red and far-red light, and implicating phytochrome nuclear bodies as sites of proteolysis for PHYs and PIFs proteins (e.g. PIF1 and PIF3). Acts downstream of PHYs and upstream of DET1. Involved in UV tolerance in both roots and hypocotyls, specifically in dark conditions. Element of a PIF4/HMR/MED14-dependent thermoresponsive process; acts as a PIF4 transcriptional coactivator to trigger the thermoresponsive growth-relevant genes (e.g. mainly involved in biosynthesis and signaling of the phytohormone auxin) and promote warm-temperature-dependent (e.g. 27 degrees Celsius) PIF4 and MED14 stabilization and accumulation, being more prominently involved in long days (LD) and continuous red light (Rc) than in short days (SD), thus modulating warm temperature elicitation of MED14-dependent thermomorphogenesis (e.g. hypocotyl elongation). This is Protein PLASTID TRANSCRIPTIONALLY ACTIVE 12, chloroplastic from Arabidopsis thaliana (Mouse-ear cress).